Reading from the N-terminus, the 235-residue chain is MPPIPPDPTESISIFHPKVILLSAGVTTSLFFGYKFYKRYIRRIKTYLDLTPTIIENNTKLYGYVTRVGDGDNFRFYHTPGGWIFGWGWLRKIPTTRKDLKDETLMIRLCGVDAPEGAHFGKPAQPFSKEALHWLREYVDGKYVTITPYSIDQYKRVVARAQIWKWTGKKDISAEMLKVGYAIVYEGKAEAEFGDNEDWYRKLESRAKLLRKGVWSLGKNLTTPGEFKRIHYRGE.

Residues 15–37 (FHPKVILLSAGVTTSLFFGYKFY) traverse the membrane as a helical segment. Residues 59–217 (TKLYGYVTRV…KLLRKGVWSL (159 aa)) form the TNase-like domain. R108 is a catalytic residue. D113 is a binding site for Ca(2+). Residues E116 and R156 contribute to the active site.

Belongs to the LCL3 family.

It is found in the mitochondrion. It localises to the membrane. The protein is Probable endonuclease LCL3 (LCL3) of Candida dubliniensis (strain CD36 / ATCC MYA-646 / CBS 7987 / NCPF 3949 / NRRL Y-17841) (Yeast).